We begin with the raw amino-acid sequence, 260 residues long: Phosphate import ATP-binding protein PstB (260 aa).

Positions 14–255 (VQVKNLAFYY…PRNKQTEDYI (242 aa)) constitute an ABC transporter domain. 46–53 (GPSGCGKS) is a binding site for ATP.

It belongs to the ABC transporter superfamily. Phosphate importer (TC 3.A.1.7) family. The complex is composed of two ATP-binding proteins (PstB), two transmembrane proteins (PstC and PstA) and a solute-binding protein (PstS).

It is found in the cell inner membrane. The enzyme catalyses phosphate(out) + ATP + H2O = ADP + 2 phosphate(in) + H(+). Its function is as follows. Part of the ABC transporter complex PstSACB involved in phosphate import. Responsible for energy coupling to the transport system. The chain is Phosphate import ATP-binding protein PstB from Syntrophotalea carbinolica (strain DSM 2380 / NBRC 103641 / GraBd1) (Pelobacter carbinolicus).